Reading from the N-terminus, the 243-residue chain is Eukaryotic translation initiation factor 4E-2 (243 aa).

This sequence belongs to the eukaryotic initiation factor 4E family. EIF4F is a multi-subunit complex, the composition of which varies with external and internal environmental conditions. It is composed of at least eIF4A, eIF4E and eIF4G. eIF4E is also known to interact with other partners.

Recognizes and binds the 7-methylguanosine-containing mRNA cap during an early step in the initiation of protein synthesis and facilitates ribosome binding by inducing the unwinding of the mRNAs secondary structures. This is Eukaryotic translation initiation factor 4E-2 (tif452) from Schizosaccharomyces pombe (strain 972 / ATCC 24843) (Fission yeast).